The primary structure comprises 485 residues: WAS/WASL-interacting protein family member 3 (485 aa).

Over residues 1-30 the composition is skewed to pro residues; the sequence is MPVPPPPPPPLPPPPPPLGAPPPPPPPGPP. Residues 1 to 485 are disordered; that stretch reads MPVPPPPPPP…NSQLSLKALR (485 aa). Short sequence motifs (profilin-binding motif) lie at residues 3 to 8, 11 to 16, and 20 to 25; these read VPPPPP, LPPPPP, and APPPPP. The WH2 domain occupies 45–62; the sequence is GRSALLADIQQGTRLRKV. Position 46 is an asymmetric dimethylarginine (Arg-46). The RLRK motif lies at 58–61; that stretch reads RLRK. A compositionally biased stretch (polar residues) spans 63–78; sequence TQINDRSAPQIESSKG. Ser-150 is modified (phosphoserine). Composition is skewed to pro residues over residues 165–200 and 207–243; these read PVPP…PPAS and VSPP…PLPP. Residue Ser-208 is modified to Phosphoserine. The span at 244-259 shows a compositional bias: low complexity; it reads ASALSEKAVRPQLAPL. Pro residues-rich tracts occupy residues 260-275 and 293-312; these read HLPP…PPYG and PPAP…PPLP. Ser-394 is subject to Phosphoserine. Residues 396–407 show a composition bias toward polar residues; sequence TTELSSKTQQPG. A compositionally biased stretch (basic and acidic residues) spans 417 to 441; it reads VIDDFESKFTFHSMEDFPPPDEYKP. The short motif at 426 to 450 is the WASP-binding motif element; that stretch reads TFHSMEDFPPPDEYKPGQKIYPSKV. Residues 475–485 show a composition bias toward polar residues; the sequence is RNSQLSLKALR.

The protein belongs to the verprolin family. As to quaternary structure, isoform 1 interacts with WASL (via WH1 domain), and monomeric and filamentous actin. In terms of tissue distribution, detected mainly in brain and at lower levels in heart and lung (at protein level). Also detected in testis but not in kidney, liver or spleen.

Its subcellular location is the cytoplasm. Functionally, may have a role in spermatogenesis. May be a regulator of cytoskeletal organization. The chain is WAS/WASL-interacting protein family member 3 (Wipf3) from Rattus norvegicus (Rat).